A 228-amino-acid polypeptide reads, in one-letter code: Ribulose-phosphate 3-epimerase (228 aa).

A substrate-binding site is contributed by serine 9. A divalent metal cation contacts are provided by histidine 34, aspartate 36, histidine 68, and aspartate 177. Aspartate 36 (proton acceptor) is an active-site residue. Substrate is bound by residues histidine 68, 177–179 (DGG), and 199–200 (GS). Residue aspartate 177 is the Proton donor of the active site.

This sequence belongs to the ribulose-phosphate 3-epimerase family. A divalent metal cation serves as cofactor.

The enzyme catalyses D-ribulose 5-phosphate = D-xylulose 5-phosphate. It participates in carbohydrate degradation. Its function is as follows. Catalyzes the reversible epimerization of D-ribulose 5-phosphate to D-xylulose 5-phosphate. The polypeptide is Ribulose-phosphate 3-epimerase (Buchnera aphidicola subsp. Acyrthosiphon pisum (strain APS) (Acyrthosiphon pisum symbiotic bacterium)).